Here is a 446-residue protein sequence, read N- to C-terminus: D(1A) dopamine receptor (446 aa).

Residues 1-23 (MRTLNTSTMEGTGLVAERDFSFR) are Extracellular-facing. The N-linked (GlcNAc...) asparagine glycan is linked to Asn-5. A helical membrane pass occupies residues 24–49 (ILTACFLSLLILSTLLGNTLVCAAVI). Over 50 to 60 (RFRHLRSKVTN) the chain is Cytoplasmic. Residues 61 to 87 (FFVISLAVSDLLVAVLVMPWKAVAEIA) traverse the membrane as a helical segment. Topologically, residues 88-96 (GFWPFGSFC) are extracellular. A disulfide bond links Cys-96 and Cys-186. Residues 97–119 (NIWVAFDIMCSTASILNLCVISV) form a helical membrane-spanning segment. Over 120 to 138 (DRYWAISSPFRYERKMTPK) the chain is Cytoplasmic. A helical membrane pass occupies residues 139–163 (AAFILISVAWTLSVLISFIPVQLSW). Residues 164–192 (HKAKPTGPSEGNATSLGKTINNCDSSLSR) are Extracellular-facing. A glycan (N-linked (GlcNAc...) asparagine) is linked at Asn-175. Residues 193–218 (TYAISSSLISFYIPVAIMIVTYTRIY) traverse the membrane as a helical segment. Over 219-272 (RIAQKQIRRISALERAAVHAKNCQTTTGNGNPMECSQPESSFKMSFKRETKVLK) the chain is Cytoplasmic. The helical transmembrane segment at 273–299 (TLSVIMGVFVCCWLPFFILNCMVPFCG) threads the bilayer. The Extracellular portion of the chain corresponds to 300–312 (SGETKPFCIDSIT). The chain crosses the membrane as a helical span at residues 313-337 (FDVFVWFGWANSSLNPIIYAFNADF). Topologically, residues 338–446 (RKAFSTLLGC…PITQNGQHPT (109 aa)) are cytoplasmic. Residues Cys-347 and Cys-351 are each lipidated (S-palmitoyl cysteine).

This sequence belongs to the G-protein coupled receptor 1 family. In terms of assembly, interacts with DNAJC14 via its C-terminus. Interacts with DRD2. Interacts with DORIP1.

Its subcellular location is the cell membrane. It localises to the endoplasmic reticulum membrane. The protein localises to the cell projection. It is found in the cilium membrane. The protein resides in the dendrite. Its subcellular location is the dendritic spine. Dopamine receptor whose activity is mediated by G proteins which activate adenylyl cyclase. The protein is D(1A) dopamine receptor (DRD1) of Bos taurus (Bovine).